Reading from the N-terminus, the 408-residue chain is Acetylornithine/succinyldiaminopimelate aminotransferase (408 aa).

Pyridoxal 5'-phosphate contacts are provided by residues 108–109 and Phe141; that span reads GA. Residue Arg144 participates in N(2)-acetyl-L-ornithine binding. 226 to 229 is a binding site for pyridoxal 5'-phosphate; that stretch reads DEIQ. N6-(pyridoxal phosphate)lysine is present on Lys255. Thr283 is a binding site for N(2)-acetyl-L-ornithine. Residue Thr284 participates in pyridoxal 5'-phosphate binding.

Belongs to the class-III pyridoxal-phosphate-dependent aminotransferase family. ArgD subfamily. Homodimer. Pyridoxal 5'-phosphate is required as a cofactor.

It localises to the cytoplasm. It carries out the reaction N(2)-acetyl-L-ornithine + 2-oxoglutarate = N-acetyl-L-glutamate 5-semialdehyde + L-glutamate. It catalyses the reaction N-succinyl-(2S,6S)-2,6-diaminopimelate + 2-oxoglutarate = (S)-2-succinylamino-6-oxoheptanedioate + L-glutamate. Its pathway is amino-acid biosynthesis; L-arginine biosynthesis; N(2)-acetyl-L-ornithine from L-glutamate: step 4/4. The protein operates within amino-acid biosynthesis; L-lysine biosynthesis via DAP pathway; LL-2,6-diaminopimelate from (S)-tetrahydrodipicolinate (succinylase route): step 2/3. Functionally, involved in both the arginine and lysine biosynthetic pathways. In Buchnera aphidicola subsp. Acyrthosiphon pisum (strain APS) (Acyrthosiphon pisum symbiotic bacterium), this protein is Acetylornithine/succinyldiaminopimelate aminotransferase.